The following is a 298-amino-acid chain: Putative ankyrin repeat-containing protein TP_0502 (298 aa).

ANK repeat units lie at residues 143–172 (CFEE…SAAL), 176–205 (RGTP…PVDQ), 210–239 (RAYS…DPNV), and 243–272 (NGQT…NPYL).

This is Putative ankyrin repeat-containing protein TP_0502 from Treponema pallidum (strain Nichols).